The sequence spans 223 residues: Phosphoribosylformylglycinamidine synthase subunit PurQ (223 aa).

Residues 4–223 (FAVVVFPGTN…FKGMVEWVRS (220 aa)) enclose the Glutamine amidotransferase type-1 domain. Cys85 acts as the Nucleophile in catalysis. Residues His196 and Glu198 contribute to the active site.

As to quaternary structure, part of the FGAM synthase complex composed of 1 PurL, 1 PurQ and 2 PurS subunits.

The protein localises to the cytoplasm. It catalyses the reaction N(2)-formyl-N(1)-(5-phospho-beta-D-ribosyl)glycinamide + L-glutamine + ATP + H2O = 2-formamido-N(1)-(5-O-phospho-beta-D-ribosyl)acetamidine + L-glutamate + ADP + phosphate + H(+). The catalysed reaction is L-glutamine + H2O = L-glutamate + NH4(+). Its pathway is purine metabolism; IMP biosynthesis via de novo pathway; 5-amino-1-(5-phospho-D-ribosyl)imidazole from N(2)-formyl-N(1)-(5-phospho-D-ribosyl)glycinamide: step 1/2. Functionally, part of the phosphoribosylformylglycinamidine synthase complex involved in the purines biosynthetic pathway. Catalyzes the ATP-dependent conversion of formylglycinamide ribonucleotide (FGAR) and glutamine to yield formylglycinamidine ribonucleotide (FGAM) and glutamate. The FGAM synthase complex is composed of three subunits. PurQ produces an ammonia molecule by converting glutamine to glutamate. PurL transfers the ammonia molecule to FGAR to form FGAM in an ATP-dependent manner. PurS interacts with PurQ and PurL and is thought to assist in the transfer of the ammonia molecule from PurQ to PurL. This Pyrococcus furiosus (strain ATCC 43587 / DSM 3638 / JCM 8422 / Vc1) protein is Phosphoribosylformylglycinamidine synthase subunit PurQ.